The sequence spans 554 residues: 3-(3-hydroxy-phenyl)propionate/3-hydroxycinnamic acid hydroxylase (554 aa).

FAD-binding positions include 17–46 (QVAI…VVEK) and 285–295 (FRIDRVLLAGD).

Belongs to the PheA/TfdB FAD monooxygenase family. The cofactor is FAD.

The catalysed reaction is 3-(3-hydroxyphenyl)propanoate + NADH + O2 + H(+) = 3-(2,3-dihydroxyphenyl)propanoate + NAD(+) + H2O. It catalyses the reaction (2E)-3-(3-hydroxyphenyl)prop-2-enoate + NADH + O2 + H(+) = (2E)-3-(2,3-dihydroxyphenyl)prop-2-enoate + NAD(+) + H2O. Its pathway is aromatic compound metabolism; 3-phenylpropanoate degradation. Functionally, catalyzes the insertion of one atom of molecular oxygen into position 2 of the phenyl ring of 3-(3-hydroxyphenyl)propionate (3-HPP) and hydroxycinnamic acid (3HCI). The protein is 3-(3-hydroxy-phenyl)propionate/3-hydroxycinnamic acid hydroxylase of Escherichia coli O157:H7.